Here is a 930-residue protein sequence, read N- to C-terminus: Isoleucine--tRNA ligase (930 aa).

Positions 57-67 (PYANGNIHVGH) match the 'HIGH' region motif. L-isoleucyl-5'-AMP is bound at residue E554. The 'KMSKS' region motif lies at 595–599 (KMSKS). K598 contributes to the ATP binding site. 4 residues coordinate Zn(2+): C888, C891, C908, and C911.

Belongs to the class-I aminoacyl-tRNA synthetase family. IleS type 1 subfamily. In terms of assembly, monomer. Zn(2+) serves as cofactor.

The protein localises to the cytoplasm. It carries out the reaction tRNA(Ile) + L-isoleucine + ATP = L-isoleucyl-tRNA(Ile) + AMP + diphosphate. In terms of biological role, catalyzes the attachment of isoleucine to tRNA(Ile). As IleRS can inadvertently accommodate and process structurally similar amino acids such as valine, to avoid such errors it has two additional distinct tRNA(Ile)-dependent editing activities. One activity is designated as 'pretransfer' editing and involves the hydrolysis of activated Val-AMP. The other activity is designated 'posttransfer' editing and involves deacylation of mischarged Val-tRNA(Ile). The sequence is that of Isoleucine--tRNA ligase from Streptococcus sanguinis (strain SK36).